The primary structure comprises 692 residues: Elongation factor G (692 aa).

Positions 8–283 (DHVRNIGIMA…AVVDYFPSPS (276 aa)) constitute a tr-type G domain. GTP contacts are provided by residues 17-24 (AHIDAGKT), 81-85 (DTPGH), and 135-138 (NKMD).

This sequence belongs to the TRAFAC class translation factor GTPase superfamily. Classic translation factor GTPase family. EF-G/EF-2 subfamily.

The protein resides in the cytoplasm. Functionally, catalyzes the GTP-dependent ribosomal translocation step during translation elongation. During this step, the ribosome changes from the pre-translocational (PRE) to the post-translocational (POST) state as the newly formed A-site-bound peptidyl-tRNA and P-site-bound deacylated tRNA move to the P and E sites, respectively. Catalyzes the coordinated movement of the two tRNA molecules, the mRNA and conformational changes in the ribosome. This Magnetococcus marinus (strain ATCC BAA-1437 / JCM 17883 / MC-1) protein is Elongation factor G.